We begin with the raw amino-acid sequence, 146 residues long: MNPAHLLVLPAVCVSFLGASIIPPQSLNLIQFKDMIRCTIPCERTWGEYADYGCYCGKGGSGRPVDALDRCCYVHDNCYGEAQKRNCNPYMKSYSFKCAKRTLFCYDAPGSCARFVCDCDRTAALCFGDSEYIGRHKNIDTKRHCQ.

A signal peptide spans 1-19 (MNPAHLLVLPAVCVSFLGA). The propeptide occupies 20-27 (SIIPPQSL). Intrachain disulfides connect cysteine 54–cysteine 145, cysteine 56–cysteine 72, cysteine 71–cysteine 126, cysteine 78–cysteine 119, cysteine 87–cysteine 112, and cysteine 105–cysteine 117. Residues tyrosine 55, glycine 57, and glycine 59 each contribute to the Ca(2+) site. The active site involves histidine 75. Aspartate 76 provides a ligand contact to Ca(2+). Residue aspartate 120 is part of the active site.

The protein belongs to the phospholipase A2 family. Group I subfamily. D49 sub-subfamily. Heterodimer with beta-bungarotoxin B chain; disulfide-linked. The A chain has phospholipase A2 activity and the B chain shows homology with the basic protease inhibitors. It depends on Ca(2+) as a cofactor. As to expression, expressed by the venom gland.

It is found in the secreted. It carries out the reaction a 1,2-diacyl-sn-glycero-3-phosphocholine + H2O = a 1-acyl-sn-glycero-3-phosphocholine + a fatty acid + H(+). Snake venom phospholipase A2 (PLA2) that inhibits neuromuscular transmission by blocking acetylcholine release from the nerve termini. PLA2 catalyzes the calcium-dependent hydrolysis of the 2-acyl groups in 3-sn-phosphoglycerides. This Bungarus flaviceps flaviceps (Red-headed krait) protein is Basic phospholipase A2 beta-bungarotoxin A1 chain.